Reading from the N-terminus, the 150-residue chain is MYSILIACLVLLLCLIIYVGHRADHARKYLEGMWHGDPVFLKQSGLQSFYLYIQPDHTCFFSVVNKNGEKLMETKIPCTITNKIYMFFKPIFEFHVVMEDIHSYFPKQFNFLLDSTEGKLILENNHVIYAVLYKDNFATALGKTVKKYIT.

The first 23 residues, Met1–Ala23, serve as a signal peptide directing secretion.

It belongs to the asfivirus EP152R family.

Its subcellular location is the virion. This is an uncharacterized protein from African swine fever virus (isolate Tick/South Africa/Pretoriuskop Pr4/1996) (ASFV).